Here is a 496-residue protein sequence, read N- to C-terminus: Aspartyl/glutamyl-tRNA(Asn/Gln) amidotransferase subunit B (496 aa).

The protein belongs to the GatB/GatE family. GatB subfamily. In terms of assembly, heterotrimer of A, B and C subunits.

The catalysed reaction is L-glutamyl-tRNA(Gln) + L-glutamine + ATP + H2O = L-glutaminyl-tRNA(Gln) + L-glutamate + ADP + phosphate + H(+). It catalyses the reaction L-aspartyl-tRNA(Asn) + L-glutamine + ATP + H2O = L-asparaginyl-tRNA(Asn) + L-glutamate + ADP + phosphate + 2 H(+). Functionally, allows the formation of correctly charged Asn-tRNA(Asn) or Gln-tRNA(Gln) through the transamidation of misacylated Asp-tRNA(Asn) or Glu-tRNA(Gln) in organisms which lack either or both of asparaginyl-tRNA or glutaminyl-tRNA synthetases. The reaction takes place in the presence of glutamine and ATP through an activated phospho-Asp-tRNA(Asn) or phospho-Glu-tRNA(Gln). This is Aspartyl/glutamyl-tRNA(Asn/Gln) amidotransferase subunit B from Picosynechococcus sp. (strain ATCC 27264 / PCC 7002 / PR-6) (Agmenellum quadruplicatum).